A 145-amino-acid chain; its full sequence is MIGLIQRVSEANVTVAGEVIGEIGKGMLVLLGVEKEDGDAEIEKLANKLCRYRMFSDEDGKMNLNIEQVGGEILVVSQFTLVADTQKGNRPGFSRGATPEHGEAIYKKFVHALRAKGMAVSTGEFGADMQVGLVNDGPVTFHFNV.

The short motif at 137–138 (GP) is the Gly-cisPro motif, important for rejection of L-amino acids element.

It belongs to the DTD family. As to quaternary structure, homodimer.

The protein resides in the cytoplasm. It carries out the reaction glycyl-tRNA(Ala) + H2O = tRNA(Ala) + glycine + H(+). The catalysed reaction is a D-aminoacyl-tRNA + H2O = a tRNA + a D-alpha-amino acid + H(+). Functionally, an aminoacyl-tRNA editing enzyme that deacylates mischarged D-aminoacyl-tRNAs. Also deacylates mischarged glycyl-tRNA(Ala), protecting cells against glycine mischarging by AlaRS. Acts via tRNA-based rather than protein-based catalysis; rejects L-amino acids rather than detecting D-amino acids in the active site. By recycling D-aminoacyl-tRNA to D-amino acids and free tRNA molecules, this enzyme counteracts the toxicity associated with the formation of D-aminoacyl-tRNA entities in vivo and helps enforce protein L-homochirality. The chain is D-aminoacyl-tRNA deacylase from Alteromonas mediterranea (strain DSM 17117 / CIP 110805 / LMG 28347 / Deep ecotype).